The following is a 149-amino-acid chain: Nucleoside diphosphate kinase (149 aa).

6 residues coordinate ATP: K9, F57, R85, T91, R102, and N112. Residue H115 is the Pros-phosphohistidine intermediate of the active site.

It belongs to the NDK family. Homotetramer. Requires Mg(2+) as cofactor.

It localises to the cytoplasm. The enzyme catalyses dZDP + ATP = dZTP + ADP. The catalysed reaction is a 2'-deoxyribonucleoside 5'-diphosphate + ATP = a 2'-deoxyribonucleoside 5'-triphosphate + ADP. It catalyses the reaction a ribonucleoside 5'-diphosphate + ATP = a ribonucleoside 5'-triphosphate + ADP. It functions in the pathway purine metabolism. Major role in the synthesis of nucleoside triphosphates other than ATP. The ATP gamma phosphate is transferred to the NDP beta phosphate via a ping-pong mechanism, using a phosphorylated active-site intermediate. Functionally, (Microbial infection) Catalyzes the phosphorylation of dZDP to dZTP, when the bacterium is infected by a phage that produces the substrate for the synthesis of dZTP (2- amino-2'-deoxyadenosine 5'-triphosphate), which is then used by the phage as a DNA polymerase substrate. This is Nucleoside diphosphate kinase from Picosynechococcus sp. (strain ATCC 27264 / PCC 7002 / PR-6) (Agmenellum quadruplicatum).